A 97-amino-acid polypeptide reads, in one-letter code: Acylphosphatase (97 aa).

Residues 9-95 form the Acylphosphatase-like domain; sequence TRHLRIHGLV…CDAQGFEQRE (87 aa). Active-site residues include R24 and N42.

The protein belongs to the acylphosphatase family.

It catalyses the reaction an acyl phosphate + H2O = a carboxylate + phosphate + H(+). The protein is Acylphosphatase (acyP) of Acidovorax sp. (strain JS42).